We begin with the raw amino-acid sequence, 415 residues long: Elongation factor Tu, chloroplastic (415 aa).

One can recognise a tr-type G domain in the interval 13–217 (KIHLNVGTIG…HLDLYLPTPR (205 aa)). Residues 22–29 (GHFSHGKT) form a G1 region. Residue 22 to 29 (GHFSHGKT) participates in GTP binding. Thr-29 lines the Mg(2+) pocket. The tract at residues 63–67 (NMSIY) is G2. The segment at 84–87 (DCPG) is G3. GTP is bound by residues 84-88 (DCPGH) and 139-142 (NKED). Residues 139 to 142 (NKED) form a G4 region. The interval 177–179 (SAL) is G5.

It belongs to the TRAFAC class translation factor GTPase superfamily. Classic translation factor GTPase family. EF-Tu/EF-1A subfamily.

The protein localises to the plastid. It is found in the chloroplast. The catalysed reaction is GTP + H2O = GDP + phosphate + H(+). Functionally, GTP hydrolase that promotes the GTP-dependent binding of aminoacyl-tRNA to the A-site of ribosomes during protein biosynthesis. The polypeptide is Elongation factor Tu, chloroplastic (tufA) (Coleochaete orbicularis (Charophycean green alga)).